The sequence spans 141 residues: Large ribosomal subunit protein uL11 (141 aa).

This sequence belongs to the universal ribosomal protein uL11 family. As to quaternary structure, part of the ribosomal stalk of the 50S ribosomal subunit. Interacts with L10 and the large rRNA to form the base of the stalk. L10 forms an elongated spine to which L12 dimers bind in a sequential fashion forming a multimeric L10(L12)X complex. In terms of processing, one or more lysine residues are methylated.

In terms of biological role, forms part of the ribosomal stalk which helps the ribosome interact with GTP-bound translation factors. This chain is Large ribosomal subunit protein uL11, found in Helicobacter hepaticus (strain ATCC 51449 / 3B1).